The primary structure comprises 259 residues: MLRKKLLKILSVLTLFIFFQYVAKFGILESLALSIVYVLLMEILRDLEILAEKRVTYKLSSTEVTKYVVSEASIFVTSLAITFLLGGEILDGLAFGFFFLVYLQWFYNEAEMERVFNDFPTFPKIFLIYRFAITLFGSTICFYRFVFGDVLKSIVAGILTFALFLSQRALNLEYVTSGKFVRSVSNPQWYFRRVKHFILSAPAMGVGATAGYIAARSAEIESIIETVCWTFRAFLLLTIVVVCILTLGSWLGLKVHKKA.

The next 6 helical transmembrane spans lie at 9–31 (ILSV…LESL), 84–106 (LLGG…LQWF), 126–148 (FLIY…FVFG), 153–175 (SIVA…LEYV), 196–215 (HFIL…YIAA), and 230–252 (TFRA…SWLG).

Its subcellular location is the cell membrane. This is an uncharacterized protein from Archaeoglobus fulgidus (strain ATCC 49558 / DSM 4304 / JCM 9628 / NBRC 100126 / VC-16).